A 123-amino-acid polypeptide reads, in one-letter code: Small ribosomal subunit protein uS12cz/uS12cy (123 aa).

The protein belongs to the universal ribosomal protein uS12 family. As to quaternary structure, part of the 30S ribosomal subunit.

It is found in the plastid. It localises to the chloroplast. Functionally, with S4 and S5 plays an important role in translational accuracy. Located at the interface of the 30S and 50S subunits. The sequence is that of Small ribosomal subunit protein uS12cz/uS12cy (rps12-A) from Eucalyptus globulus subsp. globulus (Tasmanian blue gum).